The primary structure comprises 1402 residues: Eukaryotic translation initiation factor 4 gamma 1 (1402 aa).

Disordered regions lie at residues 1–123 (MSGA…SPEP) and 165–402 (HEPN…YEYK). Phosphothreonine occurs at positions 11 and 27. Over residues 53 to 64 (GPEHSPSESQPS) the composition is skewed to low complexity. Residues 65–76 (SPSPTPSPPPIL) show a composition bias toward pro residues. S120 carries the phosphoserine modification. Over residues 238 to 251 (ASATPPAVPSATPA) the composition is skewed to low complexity. Acidic residues predominate over residues 261 to 275 (QEEEGEEEEEEEEGE). Composition is skewed to basic and acidic residues over residues 280-290 (ESDKGGEDLHP) and 324-340 (KELNKKEAVGDLLDAFK). The segment covering 359 to 370 (PTPESEGSSGPS) has biased composition (low complexity). The segment covering 379–388 (WDAKEDKIHN) has biased composition (basic and acidic residues). A Phosphothreonine modification is found at T452. Disordered stretches follow at residues 476 to 517 (ANLG…PPKG), 536 to 563 (AEKAWKPSSKRTAADKDRGEEDADGSKT), 600 to 636 (SKGSLTSSLRRPFQNPTSQWPSQHVPLPHGAESATTE), and 828 to 1028 (MAKG…KREA). Over residues 479 to 488 (GRPALSSRGP) the composition is skewed to low complexity. Residues R490 and R499 each carry the omega-N-methylarginine modification. Over residues 547–563 (TAADKDRGEEDADGSKT) the composition is skewed to basic and acidic residues. Residues 567–793 (FRRVRSILNK…QDVLDLRQSN (227 aa)) enclose the MIF4G domain. Polar residues predominate over residues 602–621 (GSLTSSLRRPFQNPTSQWPS). S832 carries the phosphoserine modification. Omega-N-methylarginine is present on residues R836 and R846. Residues S881 and S896 each carry the phosphoserine modification. The span at 892 to 913 (GGRLSWGKGSSGSGAKPSDAAS) shows a compositional bias: low complexity. K899 carries the post-translational modification N6-acetyllysine. A compositionally biased stretch (polar residues) spans 918–937 (PATSTLNRFSALQQAVPTES). A phosphoserine mark is found at S948 and S950. Basic and acidic residues predominate over residues 949–981 (LSRERGGKAGEPRRRLERSERGGDRGDRLDRAR). A Phosphoserine; by PKC/PRKCA modification is found at S988. The segment covering 989 to 1028 (FSKEVEERSRERPSQPEGLRKAASLTEDRDRGRDAAKREA) has biased composition (basic and acidic residues). Residues S990, S997, and S1012 each carry the phosphoserine modification. T1014 carries the post-translational modification Phosphothreonine. S1034 and S1041 each carry phosphoserine. The region spanning 1044–1166 (ELEKKSKAII…PMGELFREIT (123 aa)) is the MI domain. Positions 1231–1401 (EESEAPGQRA…REVEEEESDH (171 aa)) constitute a W2 domain. S1399 bears the Phosphoserine mark.

The protein belongs to the eukaryotic initiation factor 4G family. As to quaternary structure, eIF4F is a multi-subunit complex, the composition of which varies with external and internal environmental conditions. It is composed of at least EIF4A, EIF4E (cap-binding) and EIF4G1/EIF4G3. Interacts with eIF3 complex, mutually exclusive with EIF4A1 or EIF4A2, EIF4E and through its N-terminus with PABPC1. Interacts with EIF4E or with EIF1 (mutually exclusive) through a common binding site. Interacts through its C-terminus with the serine/threonine kinases MKNK1, and with MKNK2. Appears to act as a scaffold protein, holding these enzymes in place to phosphorylate EIF4E. Non-phosphorylated EIF4EBP1 competes with EIF4G1/EIF4G3 to interact with EIF4E; insulin stimulated MAP-kinase (MAPK1 and MAPK3) phosphorylation of EIF4EBP1 causes dissociation of the complex allowing EIF4G1/EIF4G3 to bind and consequent initiation of translation. EIF4G1/EIF4G3 interacts with PABPC1 to bring about circularization of the mRNA. Interacts with EIF4E3. Interacts with CIRBP and MIF4GD. Interacts with RBM4. Interacts with HNRNPD/AUF1; the interaction requires RNA. Interacts with DDX3X; the interaction requires RNA. Interacts with DAZAP2. Phosphorylated at multiple sites in vivo. Phosphorylation at Ser-988 by PRKCA induces binding to MKNK1.

The protein resides in the cytoplasm. The protein localises to the nucleus. It localises to the stress granule. Functionally, component of the protein complex eIF4F, which is involved in the recognition of the mRNA cap, ATP-dependent unwinding of 5'-terminal secondary structure and recruitment of mRNA to the ribosome. Exists in two complexes, either with EIF1 or with EIF4E (mutually exclusive). Together with EIF1, is required for leaky scanning, in particular for avoiding cap-proximal start codon. Together with EIF4E, antagonizes the scanning promoted by EIF1-EIF4G1 and locates the start codon (through a TISU element) without scanning. As a member of the eIF4F complex, required for endoplasmic reticulum stress-induced ATF4 mRNA translation. The sequence is that of Eukaryotic translation initiation factor 4 gamma 1 (EIF4G1) from Oryctolagus cuniculus (Rabbit).